A 368-amino-acid chain; its full sequence is Phosphate acyltransferase (368 aa).

A disordered region spans residues 335–368 (VSLGDGEHDAGGAGPASPAAGHHAEPSAAQSSKA). A compositionally biased stretch (low complexity) spans 349-368 (PASPAAGHHAEPSAAQSSKA).

This sequence belongs to the PlsX family. As to quaternary structure, homodimer. Probably interacts with PlsY.

The protein resides in the cytoplasm. The catalysed reaction is a fatty acyl-[ACP] + phosphate = an acyl phosphate + holo-[ACP]. The protein operates within lipid metabolism; phospholipid metabolism. Functionally, catalyzes the reversible formation of acyl-phosphate (acyl-PO(4)) from acyl-[acyl-carrier-protein] (acyl-ACP). This enzyme utilizes acyl-ACP as fatty acyl donor, but not acyl-CoA. This is Phosphate acyltransferase from Burkholderia multivorans (strain ATCC 17616 / 249).